We begin with the raw amino-acid sequence, 500 residues long: Cytochrome P450 monooxygenase ausI (500 aa).

The helical transmembrane segment at 8 to 28 threads the bilayer; the sequence is LALLGQPLVPGLMVVSAILYL. Residue Cys440 coordinates heme.

Belongs to the cytochrome P450 family. Requires heme as cofactor.

Its subcellular location is the membrane. It participates in secondary metabolite biosynthesis; terpenoid biosynthesis. In terms of biological role, cytochrome P450 monooxygenase; part of the gene cluster B that mediates the biosynthesis of the fungal meroterpenoid acetoxydehydroaustin. The first step of the pathway is the synthesis of 3,5-dimethylorsellinic acid by the polyketide synthase ausA. 3,5-dimethylorsellinic acid is then prenylated by the polyprenyl transferase ausN. Further epoxidation by the FAD-dependent monooxygenase ausM and cyclization by the probable terpene cyclase ausL lead to the formation of protoaustinoid A. Protoaustinoid A is then oxidized to spiro-lactone preaustinoid A3 by the combined action of the FAD-binding monooxygenases ausB and ausC, and the dioxygenase ausE. Acid-catalyzed keto-rearrangement and ring contraction of the tetraketide portion of preaustinoid A3 by ausJ lead to the formation of preaustinoid A4. The aldo-keto reductase ausK, with the help of ausH, is involved in the next step by transforming preaustinoid A4 into isoaustinone which is in turn hydroxylated by the P450 monooxygenase ausI to form austinolide. The cytochrome P450 monooxygenase ausG then modifies austinolide to austinol. Austinol is further acetylated to austin by the O-acetyltransferase ausP, which spontaneously changes to dehydroaustin. The cytochrome P450 monooxygenase then converts dehydroaustin is into 7-dehydrodehydroaustin. The hydroxylation catalyzed by ausR permits the second O-acetyltransferase ausQ to add an additional acetyl group to the molecule, leading to the formation of acetoxydehydroaustin. Due to genetic rearrangements of the clusters and the subsequent loss of some enzymes, the end product of the Penicillium brasilianum austinoid biosynthesis clusters is acetoxydehydroaustin. The polypeptide is Cytochrome P450 monooxygenase ausI (Penicillium brasilianum).